The primary structure comprises 332 residues: GDP-mannose transporter 2 (332 aa).

The Cytoplasmic portion of the chain corresponds to 1–12 (MSSLKVSQQDKK). Residues 13–33 (WVNSGSVAILAYCASSILMTI) traverse the membrane as a helical segment. Residues 34–47 (TNKVVMSDRTFNMN) are Lumenal-facing. A helical membrane pass occupies residues 48-68 (FLLLFIQSLVCVITLLVLKVL). Residues 69-84 (GSVNFRSFNKTDARNW) lie on the Cytoplasmic side of the membrane. Residues 85–105 (FPISICLVLMIFTSSKSLQYL) traverse the membrane as a helical segment. The Lumenal segment spans residues 106-108 (SVP). A helical membrane pass occupies residues 109-129 (VYTIFKNLTIIVIAYGEVLFF). At 130–131 (GS) the chain is on the cytoplasmic side. A helical membrane pass occupies residues 132–152 (SVGNMELGSFALMIVSSLIAA). At 153 to 174 (HGDYLHSVERLKKMLGPNVSFS) the chain is on the lumenal side. The N-linked (GlcNAc...) asparagine glycan is linked to asparagine 170. Residues 175–195 (FIVNIGYFWIAANCFASALFV) form a helical membrane-spanning segment. Residues 196–211 (LLMRKRIQVTNFKDFD) are Cytoplasmic-facing. Residues 212 to 232 (TMFYNNVLSLPLLLLGSYLFE) traverse the membrane as a helical segment. At 233-248 (DWSQENLLPHVDIDNL) the chain is on the lumenal side. A glycan (N-linked (GlcNAc...) asparagine) is linked at asparagine 247. Residues 249-269 (STMIISGLASVAISYCSGWCV) traverse the membrane as a helical segment. The Cytoplasmic segment spans residues 270 to 274 (RVTSS). The chain crosses the membrane as a helical span at residues 275–295 (TTYSMVGALNKLPIALTGFLF). Residues 296-300 (NDAAR) are Lumenal-facing. Residues 301-321 (NLSSAASILLGFASGIIYAVA) traverse the membrane as a helical segment. The Cytoplasmic segment spans residues 322 to 332 (KQKKLQNSEKI).

This sequence belongs to the TPT transporter family. SLC35D subfamily. In terms of assembly, homooligomer.

The protein resides in the golgi apparatus membrane. It localises to the cytoplasmic vesicle membrane. Its subcellular location is the endoplasmic reticulum membrane. Its function is as follows. Involved in the import of GDP-mannose from the cytoplasm into the Golgi lumen. The sequence is that of GDP-mannose transporter 2 (VRG4-2) from Vanderwaltozyma polyspora (strain ATCC 22028 / DSM 70294 / BCRC 21397 / CBS 2163 / NBRC 10782 / NRRL Y-8283 / UCD 57-17) (Kluyveromyces polysporus).